The primary structure comprises 409 residues: Sex-determination protein fem-3 (409 aa).

In terms of assembly, component of a complex containing fem-1, fem-2 and fem-3. Interacts with fem-1 and fem-2 (via N-terminus). Part of a E3 ubiquitin-protein ligase complex, at least composed of cul-2, elc-1, tra-1, fem-1, fem-2 and fem-3; mediates the ubiquitination and subsequent proteasomal degradation of tra-1. Interacts with sel-10. Interacts with tra-2.

Required for male development. In XO (male) animals, fem-3 directs male differentiation in all tissues. In XX (hermaphrodite animals), it specifies the first 80 or so germ cells to be sperm. Negatively regulates male development when bound to tra-2. This Caenorhabditis briggsae protein is Sex-determination protein fem-3.